The sequence spans 395 residues: E3 ubiquitin-protein ligase RDUF1 (395 aa).

Disordered stretches follow at residues 1–22 (MMPN…TTTT) and 107–130 (PVIV…EGDG). Over residues 9–22 (TITPTTESTTTTTT) the composition is skewed to low complexity. Residues 121 to 130 (ERVENEEGDG) are compositionally biased toward basic and acidic residues. The segment at 215–256 (CAVCTEVFEAGIEGREMPCKHIFHGDCIVPWLSIRNSCPVCR) adopts an RING-type; atypical zinc-finger fold.

Expressed in root tips, leaf tips, junction of carpels and pedicels, stigma, anthers, pollen, vasculature of sepals and petals, immature seeds and embryos.

The protein localises to the cytoplasm. The protein resides in the cytosol. Its subcellular location is the nucleus. The catalysed reaction is S-ubiquitinyl-[E2 ubiquitin-conjugating enzyme]-L-cysteine + [acceptor protein]-L-lysine = [E2 ubiquitin-conjugating enzyme]-L-cysteine + N(6)-ubiquitinyl-[acceptor protein]-L-lysine.. It participates in protein modification; protein ubiquitination. Functionally, E3 ubiquitin-protein ligase involved in the positive regulation of abscisic acid-dependent drought stress responses. Involved in the positive regulation of responses to salt and osmotic stresses during seed germination and early seedling development. Possesses E3 ubiquitin ligase activity in vitro. The protein is E3 ubiquitin-protein ligase RDUF1 of Arabidopsis thaliana (Mouse-ear cress).